The primary structure comprises 376 residues: Deoxyuridine 5'-triphosphate nucleotidohydrolase (376 aa).

This sequence belongs to the dUTPase family. The cofactor is Mg(2+).

It carries out the reaction dUTP + H2O = dUMP + diphosphate + H(+). Its function is as follows. Involved in nucleotide metabolism: produces dUMP, the immediate precursor of thymidine nucleotides and decreases the intracellular concentration of dUTP to avoid uracil incorporation into viral DNA. This chain is Deoxyuridine 5'-triphosphate nucleotidohydrolase, found in Homo sapiens (Human).